A 45-amino-acid chain; its full sequence is DNA-directed RNA polymerase subunit Rpo12 (45 aa).

Zn(2+) contacts are provided by Cys8, Cys23, and Cys26.

The protein belongs to the archaeal Rpo12/eukaryotic RPC10 RNA polymerase subunit family. In terms of assembly, part of the RNA polymerase complex. The cofactor is Zn(2+).

The protein resides in the cytoplasm. It catalyses the reaction RNA(n) + a ribonucleoside 5'-triphosphate = RNA(n+1) + diphosphate. Functionally, DNA-dependent RNA polymerase (RNAP) catalyzes the transcription of DNA into RNA using the four ribonucleoside triphosphates as substrates. The polypeptide is DNA-directed RNA polymerase subunit Rpo12 (Methanosarcina acetivorans (strain ATCC 35395 / DSM 2834 / JCM 12185 / C2A)).